The primary structure comprises 135 residues: HTH-type transcriptional regulator DicA (135 aa).

An HTH cro/C1-type domain is found at 12-66 (IRYRRKNLKHTQRSLAKALKISHVSVSQWERGDSEPTGKNLFALSKVLQCSPTWI). The H-T-H motif DNA-binding region spans 23 to 42 (QRSLAKALKISHVSVSQWER).

In terms of biological role, this protein is a repressor of division inhibition gene dicB. The protein is HTH-type transcriptional regulator DicA (dicA) of Escherichia coli (strain K12).